The chain runs to 160 residues: Serine-protein kinase RsbW (160 aa).

It belongs to the anti-sigma-factor family.

It catalyses the reaction L-seryl-[protein] + ATP = O-phospho-L-seryl-[protein] + ADP + H(+). The enzyme catalyses L-threonyl-[protein] + ATP = O-phospho-L-threonyl-[protein] + ADP + H(+). Its function is as follows. Negative regulator of sigma-B activity. Phosphorylates and inactivates its specific antagonist protein, RsbV. Upon phosphorylation of RsbV, RsbW is released and binds to sigma-B, thereby blocking its ability to form an RNA polymerase holoenzyme (E-sigma-B). The protein is Serine-protein kinase RsbW of Bacillus licheniformis.